The sequence spans 66 residues: Small ribosomal subunit protein bS21 (66 aa).

This sequence belongs to the bacterial ribosomal protein bS21 family.

The protein is Small ribosomal subunit protein bS21 of Persephonella marina (strain DSM 14350 / EX-H1).